A 211-amino-acid chain; its full sequence is Tudor-interacting repair regulator protein (211 aa).

Glycyl lysine isopeptide (Lys-Gly) (interchain with G-Cter in ubiquitin) cross-links involve residues Lys10 and Lys151. Positions Thr118–Lys205 are interaction with PXN.

The protein belongs to the Nudix hydrolase family. TIRR subfamily. In terms of assembly, homodimer. Interacts with TP53BP1 (via the Tudor-like domain); interaction is abolished following DNA damage and TP53BP1 phosphorylation by ATM. Interacts (via the cytoplasmic part) with SDC4. Interacts with TGFB1I1 and PXN.

It is found in the nucleus. In terms of biological role, key regulator of TP53BP1 required to stabilize TP53BP1 and regulate its recruitment to chromatin. In absence of DNA damage, interacts with the tandem Tudor-like domain of TP53BP1, masking the region that binds histone H4 dimethylated at 'Lys-20' (H4K20me2), thereby preventing TP53BP1 recruitment to chromatin and maintaining TP53BP1 localization to the nucleus. Following DNA damage, ATM-induced phosphorylation of TP53BP1 and subsequent recruitment of RIF1 leads to dissociate NUDT16L1/TIRR from TP53BP1, unmasking the tandem Tudor-like domain and allowing recruitment of TP53BP1 to DNA double strand breaks (DSBs). Binds U8 snoRNA. This chain is Tudor-interacting repair regulator protein, found in Homo sapiens (Human).